The chain runs to 680 residues: Dihydroxyacetone phosphate acyltransferase (680 aa).

Phosphoserine occurs at positions 12 and 17. The HXXXXD motif signature appears at 162–167 (HRSYID). An N6-acetyllysine modification is found at Lys-643. Residues 678–680 (AKL) carry the Microbody targeting signal motif.

The protein belongs to the GPAT/DAPAT family. In terms of assembly, part of a heterotrimeric complex composed of GNPAT, AGPS and a modified form of GNPAT.

The protein localises to the peroxisome membrane. The catalysed reaction is dihydroxyacetone phosphate + an acyl-CoA = a 1-acylglycerone 3-phosphate + CoA. The enzyme catalyses dihydroxyacetone phosphate + hexadecanoyl-CoA = 1-hexadecanoylglycerone 3-phosphate + CoA. The protein operates within membrane lipid metabolism; glycerophospholipid metabolism. Its function is as follows. Dihydroxyacetonephosphate acyltransferase catalyzing the first step in the biosynthesis of plasmalogens, a subset of phospholipids that differ from other glycerolipids by having an alkyl chain attached through a vinyl ether linkage at the sn-1 position of the glycerol backbone, and which unique physical properties have an impact on various aspects of cell signaling and membrane biology. The protein is Dihydroxyacetone phosphate acyltransferase of Homo sapiens (Human).